The primary structure comprises 218 residues: N-(5'-phosphoribosyl)anthranilate isomerase (218 aa).

It belongs to the TrpF family.

The catalysed reaction is N-(5-phospho-beta-D-ribosyl)anthranilate = 1-(2-carboxyphenylamino)-1-deoxy-D-ribulose 5-phosphate. It participates in amino-acid biosynthesis; L-tryptophan biosynthesis; L-tryptophan from chorismate: step 3/5. The chain is N-(5'-phosphoribosyl)anthranilate isomerase from Lachnoclostridium phytofermentans (strain ATCC 700394 / DSM 18823 / ISDg) (Clostridium phytofermentans).